Consider the following 412-residue polypeptide: Putative odorant receptor 85d (412 aa).

Residues 1 to 56 are Cytoplasmic-facing; that stretch reads MLTKKDTQSAKEQEKLKAIPLHSFLKYANVFYLSIGMMAYDHKYSQKWKEVLLHWT. A helical transmembrane segment spans residues 57–77; it reads FIAQMVNLNTVLISELIYVFL. Residues 78 to 84 lie on the Extracellular side of the membrane; the sequence is AIGKGSN. The helical transmembrane segment at 85-105 threads the bilayer; that stretch reads FLEATMNLSFIGFVIVGDFKI. Residues 106–152 are Cytoplasmic-facing; the sequence is WNISRQRKRLTQVVSRLEELHPQGLAQQEPYNIGHHLSGYSRYSKFY. Residues 153–173 traverse the membrane as a helical segment; the sequence is FGMHMVLIWTYNLYWAVYYLV. Over 174–219 the chain is Extracellular; it reads CDFWLGMRQFERMLPYYCWVPWDWSTGYSYYFMYISQNIGGQACLS. Residues 220 to 240 traverse the membrane as a helical segment; that stretch reads GQLAADMLMCALVTLVVMHFI. Residues 241-282 lie on the Cytoplasmic side of the membrane; that stretch reads RLSAHIESHVAGIGSFQHDLEFLQATVAYHQSLIHLCQDINE. A helical membrane pass occupies residues 283-303; that stretch reads IFGVSLLSNFVSSSFIICFVG. Topologically, residues 304–314 are extracellular; sequence FQMTIGSKIDN. A helical transmembrane segment spans residues 315 to 335; sequence LVMLVLFLFCAMVQVFMIATH. Topologically, residues 336-382 are cytoplasmic; sequence AQRLVDASEQIGQAVYNHDWFRADLRYRKMLILIIKRAQQPSRLKAT. The chain crosses the membrane as a helical span at residues 383–403; the sequence is MFLNISLVTVSDLLQLSYKFF. At 404 to 412 the chain is on the extracellular side; sequence ALLRTMYVN.

Belongs to the insect chemoreceptor superfamily. Heteromeric odorant receptor channel (TC 1.A.69) family. Or49a subfamily. As to quaternary structure, interacts with Orco. Complexes exist early in the endomembrane system in olfactory sensory neurons (OSNs), coupling these complexes to the conserved ciliary trafficking pathway. In terms of tissue distribution, expressed in olfactory sensory neurons in the maxillary palp.

It localises to the cell membrane. In terms of biological role, odorant receptor which mediates acceptance or avoidance behavior, depending on its substrates. The odorant receptor repertoire encodes a large collection of odor stimuli that vary widely in identity, intensity, and duration. May form a complex with Orco to form odorant-sensing units, providing sensitive and prolonged odorant signaling and calcium permeability. The sequence is that of Putative odorant receptor 85d (Or85d) from Drosophila melanogaster (Fruit fly).